Consider the following 224-residue polypeptide: BTB/POZ domain-containing protein At5g48510 (224 aa).

Positions 24 to 98 constitute a BTB domain; sequence VDVMLKAKNS…ICSDGSMLSA (75 aa).

Interacts with CUL3A.

It participates in protein modification; protein ubiquitination. Functionally, may act as a substrate-specific adapter of an E3 ubiquitin-protein ligase complex (CUL3-RBX1-BTB) which mediates the ubiquitination and subsequent proteasomal degradation of target proteins. This chain is BTB/POZ domain-containing protein At5g48510, found in Arabidopsis thaliana (Mouse-ear cress).